We begin with the raw amino-acid sequence, 261 residues long: Ribonuclease HII (261 aa).

The 189-residue stretch at 71–259 folds into the RNase H type-2 domain; sequence KYIAGVDEVG…VKESKLHFDS (189 aa). 3 residues coordinate a divalent metal cation: aspartate 77, glutamate 78, and aspartate 169.

This sequence belongs to the RNase HII family. Requires Mn(2+) as cofactor. Mg(2+) serves as cofactor.

Its subcellular location is the cytoplasm. It catalyses the reaction Endonucleolytic cleavage to 5'-phosphomonoester.. Endonuclease that specifically degrades the RNA of RNA-DNA hybrids. The polypeptide is Ribonuclease HII (Listeria monocytogenes serovar 1/2a (strain ATCC BAA-679 / EGD-e)).